Consider the following 261-residue polypeptide: Histone H3-like centromeric protein cpar-1 (261 aa).

A disordered region spans residues 80-150; it reads TVGSNSTNLV…AGSSSSDRVR (71 aa). The span at 113–127 shows a compositional bias: polar residues; sequence AANSHHQSPINVGNR. A compositionally biased stretch (low complexity) spans 132 to 146; the sequence is GTNGRNGSRAGSSSS. An H3-like region spans residues 164-261; it reads YRPGQKALEE…LYRRLCLPNL (98 aa).

This sequence belongs to the histone H3 family. As to quaternary structure, forms a nucleosome-like histone octamer containing two molecules each of H2A, H2B, cpar-1 and H4 assembled in one cpar-1-H4 heterotetramer and two H2A-H2B heterodimers. Cleaved at the onset of meiotic anaphase I, likely by separase sep-1.

It is found in the nucleus. The protein localises to the chromosome. In terms of biological role, histone H3-like variant which exclusively replaces conventional H3 in the nucleosome core of centromeric chromatin at the inner plate of the kinetochore. Required for recruitment and assembly of kinetochore proteins, mitotic progression and chromosome segregation. May serve as an epigenetic mark that propagates centromere identity through replication and cell division. Not required for chromosome segregation during meiosis. The sequence is that of Histone H3-like centromeric protein cpar-1 from Caenorhabditis elegans.